A 103-amino-acid chain; its full sequence is UPF0235 protein RL4503 (103 aa).

The protein belongs to the UPF0235 family.

In Rhizobium johnstonii (strain DSM 114642 / LMG 32736 / 3841) (Rhizobium leguminosarum bv. viciae), this protein is UPF0235 protein RL4503.